Reading from the N-terminus, the 227-residue chain is Transcription antitermination protein NusB (227 aa).

2 disordered regions span residues 165–189 (ASESLDDAPVAPWDDSDALDDSDED) and 201–227 (AEETVEVSEVAEDSEVSKVSEEKADES). Composition is skewed to acidic residues over residues 178-189 (DDSDALDDSDED) and 201-214 (AEETVEVSEVAEDS). Residues 215–227 (EVSKVSEEKADES) show a composition bias toward basic and acidic residues.

It belongs to the NusB family.

In terms of biological role, involved in transcription antitermination. Required for transcription of ribosomal RNA (rRNA) genes. Binds specifically to the boxA antiterminator sequence of the ribosomal RNA (rrn) operons. The sequence is that of Transcription antitermination protein NusB from Corynebacterium glutamicum (strain ATCC 13032 / DSM 20300 / JCM 1318 / BCRC 11384 / CCUG 27702 / LMG 3730 / NBRC 12168 / NCIMB 10025 / NRRL B-2784 / 534).